The sequence spans 241 residues: Tumor necrosis factor ligand superfamily member 13 (241 aa).

A propeptide spanning residues 1 to 95 is cleaved from the precursor; sequence MPASSPGHMG…KDGAKSRRRR (95 aa). Positions 107–241 constitute a THD domain; it reads SVLHLVPVNI…HGTFLGFVKL (135 aa). A glycan (N-linked (GlcNAc...) asparagine) is linked at asparagine 115. Cysteine 187 and cysteine 202 are oxidised to a cystine.

The protein belongs to the tumor necrosis factor family. Homotrimer. The soluble form derives from the membrane form by proteolytic processing.

Its subcellular location is the secreted. Its function is as follows. Cytokine that binds to TNFRSF13B/TACI and to TNFRSF17/BCMA. Plays a role in the regulation of tumor cell growth. May be involved in monocyte/macrophage-mediated immunological processes. This Mus musculus (Mouse) protein is Tumor necrosis factor ligand superfamily member 13 (Tnfsf13).